Consider the following 156-residue polypeptide: MPRKGSVPKRDVLPDPIHNSKLVTKLINKIMLDGKRGTAQRILYSAFDLVEQRSGRDALEVFEEAINNIMPVLEVKARRVGGSNYQVPVEVRPERRTTLGLRWLVNYARLRGEKTMEDRLANEILDAANNTGGAVKKREDTHKMAEANKAFAHYRW.

It belongs to the universal ribosomal protein uS7 family. In terms of assembly, part of the 30S ribosomal subunit. Contacts proteins S9 and S11.

In terms of biological role, one of the primary rRNA binding proteins, it binds directly to 16S rRNA where it nucleates assembly of the head domain of the 30S subunit. Is located at the subunit interface close to the decoding center, probably blocks exit of the E-site tRNA. The polypeptide is Small ribosomal subunit protein uS7 (Staphylococcus aureus (strain USA300)).